The chain runs to 147 residues: Ribonuclease H (147 aa).

The region spanning 5–141 (ARKQITLYSD…CDELARNEAE (137 aa)) is the RNase H type-1 domain. Positions 14, 52, 74, and 133 each coordinate Mg(2+).

This sequence belongs to the RNase H family. As to quaternary structure, monomer. Requires Mg(2+) as cofactor.

The protein resides in the cytoplasm. The catalysed reaction is Endonucleolytic cleavage to 5'-phosphomonoester.. In terms of biological role, endonuclease that specifically degrades the RNA of RNA-DNA hybrids. In Sulfurovum sp. (strain NBC37-1), this protein is Ribonuclease H.